Consider the following 696-residue polypeptide: Putative zinc metalloproteinase YIL108W (696 aa).

A Glycyl lysine isopeptide (Lys-Gly) (interchain with G-Cter in ubiquitin) cross-link involves residue K245. Position 318 (H318) interacts with Zn(2+). The active site involves E319. The Zn(2+) site is built by H322 and H328. S361 carries the post-translational modification Phosphoserine. Glycyl lysine isopeptide (Lys-Gly) (interchain with G-Cter in ubiquitin) cross-links involve residues K478, K518, K579, K590, and K596. The region spanning 522–695 (GIKSPLYGRS…VDAFGIIYGA (174 aa)) is the Jacalin-type lectin domain.

The protein belongs to the peptidase M10B family. It depends on Zn(2+) as a cofactor.

The protein localises to the cytoplasm. This Saccharomyces cerevisiae (strain ATCC 204508 / S288c) (Baker's yeast) protein is Putative zinc metalloproteinase YIL108W.